The following is a 91-amino-acid chain: MNSLLKVAVVCLVMLVACFVPRVILTDDADTEYNSDYLLPKRAGCKCADGRQETYYFMGCQGGWYRCSPHYVIGDCCKKFSGKYGTFAVRF.

Positions 1-26 (MNSLLKVAVVCLVMLVACFVPRVILT) are cleaved as a signal peptide. Cystine bridges form between Cys-45–Cys-76, Cys-47–Cys-67, and Cys-60–Cys-77.

As to expression, expressed in ectodermal gland cells.

In terms of biological role, has toxic effects on zebrafish larvae. It causes contractile paralysis and twitching of the tail within 20 minutes, followed by death within 30 minutes. Does not show any toxicity when injected into arthropods (cherry shrimps or grass shrimps). In Nematostella vectensis (Starlet sea anemone), this protein is N.vectensis toxin 8.